The chain runs to 187 residues: Putative gamma-glutamylcyclotransferase At3g02910 (187 aa).

Position 17-20 (17-20 (YGTL)) interacts with substrate. Catalysis depends on E92, which acts as the Proton acceptor.

The protein belongs to the gamma-glutamylcyclotransferase family.

Putative gamma-glutamylcyclotransferase. The sequence is that of Putative gamma-glutamylcyclotransferase At3g02910 from Arabidopsis thaliana (Mouse-ear cress).